Consider the following 176-residue polypeptide: Large ribosomal subunit protein uL22 (176 aa).

The segment at V113–D176 is disordered. Low complexity predominate over residues S136–A152. Residues T159 to D176 are compositionally biased toward basic and acidic residues.

The protein belongs to the universal ribosomal protein uL22 family. As to quaternary structure, part of the 50S ribosomal subunit.

Its function is as follows. This protein binds specifically to 23S rRNA; its binding is stimulated by other ribosomal proteins, e.g. L4, L17, and L20. It is important during the early stages of 50S assembly. It makes multiple contacts with different domains of the 23S rRNA in the assembled 50S subunit and ribosome. In terms of biological role, the globular domain of the protein is located near the polypeptide exit tunnel on the outside of the subunit, while an extended beta-hairpin is found that lines the wall of the exit tunnel in the center of the 70S ribosome. In Mycobacterium ulcerans (strain Agy99), this protein is Large ribosomal subunit protein uL22.